A 70-amino-acid chain; its full sequence is Large ribosomal subunit protein uL29 (70 aa).

The protein belongs to the universal ribosomal protein uL29 family.

The sequence is that of Large ribosomal subunit protein uL29 from Symbiobacterium thermophilum (strain DSM 24528 / JCM 14929 / IAM 14863 / T).